The primary structure comprises 471 residues: Glutamate--tRNA ligase (471 aa).

A 'HIGH' region motif is present at residues 9–19; that stretch reads PSPTGYLHVGG. Zn(2+) is bound by residues cysteine 98, cysteine 100, cysteine 125, and histidine 127. The short motif at 237–241 is the 'KMSKS' region element; sequence KLSKR. Lysine 240 serves as a coordination point for ATP.

Belongs to the class-I aminoacyl-tRNA synthetase family. Glutamate--tRNA ligase type 1 subfamily. Monomer. It depends on Zn(2+) as a cofactor.

The protein resides in the cytoplasm. It catalyses the reaction tRNA(Glu) + L-glutamate + ATP = L-glutamyl-tRNA(Glu) + AMP + diphosphate. In terms of biological role, catalyzes the attachment of glutamate to tRNA(Glu) in a two-step reaction: glutamate is first activated by ATP to form Glu-AMP and then transferred to the acceptor end of tRNA(Glu). The chain is Glutamate--tRNA ligase from Escherichia coli O1:K1 / APEC.